A 288-amino-acid polypeptide reads, in one-letter code: MKSFCVKAPAKINLFLHVVDKKETGYHLIEGLFVFANLSNFLEIKVGEKDSRYDNSTVEFINSESKINNQYNTVMKAVNLLLRHAPVRTKVTVKVVKNIPIAAGLGSGSSDAGAVVRTLGKLWEIDRTILNEIALNVGADVPASVDSKPVFVRGIGEELCHIKKFSLPTNVVLVKPKKRFLSTPEVFSKHEGKFSEPIKWSDDAEKDLLKFLKETRNDLQEIAISFVPEIKDVISTLKSQEGSILSRMSGSGVSCFGIFDSEENAKAAAVNIGKKQPEWWVCNTQLIV.

Residue Lys-11 is part of the active site. An ATP-binding site is contributed by 100 to 110 (PIAAGLGSGSS). Asp-140 is an active-site residue.

The protein belongs to the GHMP kinase family. IspE subfamily.

The enzyme catalyses 4-CDP-2-C-methyl-D-erythritol + ATP = 4-CDP-2-C-methyl-D-erythritol 2-phosphate + ADP + H(+). The protein operates within isoprenoid biosynthesis; isopentenyl diphosphate biosynthesis via DXP pathway; isopentenyl diphosphate from 1-deoxy-D-xylulose 5-phosphate: step 3/6. Functionally, catalyzes the phosphorylation of the position 2 hydroxy group of 4-diphosphocytidyl-2C-methyl-D-erythritol. This is 4-diphosphocytidyl-2-C-methyl-D-erythritol kinase from Wolbachia pipientis wMel.